The chain runs to 279 residues: Large ribosomal subunit protein uL3 (279 aa).

An N5-methylglutamine modification is found at glutamine 151.

This sequence belongs to the universal ribosomal protein uL3 family. Part of the 50S ribosomal subunit. Forms a cluster with proteins L14 and L19. Post-translationally, methylated by PrmB.

In terms of biological role, one of the primary rRNA binding proteins, it binds directly near the 3'-end of the 23S rRNA, where it nucleates assembly of the 50S subunit. The polypeptide is Large ribosomal subunit protein uL3 (Dinoroseobacter shibae (strain DSM 16493 / NCIMB 14021 / DFL 12)).